The sequence spans 466 residues: Acetylornithine aminotransferase, mitochondrial (466 aa).

At Lys-308 the chain carries N6-(pyridoxal phosphate)lysine.

Belongs to the class-III pyridoxal-phosphate-dependent aminotransferase family. Pyridoxal 5'-phosphate is required as a cofactor.

The protein resides in the mitochondrion matrix. It carries out the reaction N(2)-acetyl-L-ornithine + 2-oxoglutarate = N-acetyl-L-glutamate 5-semialdehyde + L-glutamate. The protein operates within amino-acid biosynthesis; L-arginine biosynthesis; N(2)-acetyl-L-ornithine from L-glutamate: step 4/4. The chain is Acetylornithine aminotransferase, mitochondrial (ARG8) from Debaryomyces hansenii (strain ATCC 36239 / CBS 767 / BCRC 21394 / JCM 1990 / NBRC 0083 / IGC 2968) (Yeast).